The sequence spans 583 residues: MAGDGRRAEAVREGWGVYVTPRAPIREGRGRLAPQNGGSSDAPAYRTPPSRQGRREVRFSDEPPEVYGDFEPLVAKERSPVGKRTRLEEFRSDSAKEEVRESAYYLRSRQRRQPRPQETEEMKTRRTTRLQQQHSEQPPLQPSPVMTRRGLRDSHSSEEDEASSQTDLSQTISKKTVRSIQEAPVSEDLVIRLRRPPLRYPRYEATSVQQKVNFSEEGETEEDDQDSSHSSVTTVKARSRDSDESGDKTTRSSSQYIESFWQSSQSQNFTAHDKQPSVLSSGYQKTPQEWAPQTARIRTRMQNDSILKSELGNQSPSTSSRQVTGQPQNASFVKRNRWWLLPLIAALASGSFWFFSTPEVETTAVQEFQNQMNQLKNKYQGQDEKLWKRSQTFLEKHLNSSHPRSQPAILLLTAARDAEEALRCLSEQIADAYSSFRSVRAIRIDGTDKATQDSDTVKLEVDQELSNGFKNGQNAAVVHRFESFPAGSTLIFYKYCDHENAAFKDVALVLTVLLEEETLGTSLGLKEVEEKVRDFLKVKFTNSNTPNSYNHMDPDKLNGLWSRISHLVLPVQPENALKRGICL.

The segment covering 1-12 (MAGDGRRAEAVR) has biased composition (basic and acidic residues). Disordered regions lie at residues 1–254 (MAGD…RSSS) and 271–293 (AHDK…WAPQ). At 1–338 (MAGDGRRAEA…NASFVKRNRW (338 aa)) the chain is on the nuclear side. Serine 60 carries the post-translational modification Phosphoserine. Composition is skewed to basic and acidic residues over residues 74–101 (VAKE…EVRE) and 115–124 (RPQETEEMKT). 2 positions are modified to phosphoserine: serine 135 and serine 143. Methionine 146 carries the methionine sulfoxide modification. Serine 154, serine 156, and serine 157 each carry phosphoserine. Polar residues predominate over residues 165–174 (QTDLSQTISK). Phosphoserine occurs at positions 186 and 215. Positions 216–225 (EEGETEEDDQ) are enriched in acidic residues. Threonine 220 is modified (phosphothreonine). Phosphoserine occurs at positions 227, 230, and 242. The segment covering 238 to 250 (RSRDSDESGDKTT) has biased composition (basic and acidic residues). The span at 277 to 287 (SVLSSGYQKTP) shows a compositional bias: polar residues. A Methionine sulfoxide modification is found at methionine 301. Serine 305 bears the Phosphoserine mark. Lysine 308 is covalently cross-linked (Glycyl lysine isopeptide (Lys-Gly) (interchain with G-Cter in SUMO2)). 2 positions are modified to phosphoserine: serine 309 and serine 315. The interval 309–328 (SELGNQSPSTSSRQVTGQPQ) is disordered. A helical transmembrane segment spans residues 339 to 355 (WLLPLIAALASGSFWFF). Over 356–583 (STPEVETTAV…ENALKRGICL (228 aa)) the chain is Perinuclear space. The interaction with TOR1A stretch occupies residues 356–583 (STPEVETTAV…ENALKRGICL (228 aa)). A coiled-coil region spans residues 359–435 (EVETTAVQEF…SEQIADAYSS (77 aa)). The N-linked (GlcNAc...) asparagine glycan is linked to asparagine 399. Methionine 552 is modified (methionine sulfoxide).

It belongs to the TOR1AIP family. As to quaternary structure, interacts with ATP1B4. Interacts with TOR1A (ATP-bound). Interacts with TOR1B, TOR2A and TOR3A. Interacts with VIM. Phosphorylated. Dephosphorylated at Ser-309 and Ser-315 by serine/threonine-protein phosphatase PP1. Expressed in muscle, liver and kidney. In terms of tissue distribution, major isoform present in liver, brain and heart (at protein level). Expressed at lower levels than isoform 4 in lung, kidney and spleen (at protein level). Similar levels of isoforms 1 and 4 are observed in ovary, testis and pancreas (at protein level). As to expression, expressed at higher levels than isoform 1 in lung, kidney and spleen (at protein level). Expressed at lower levels than isoform 1 in liver, brain and heart (at protein level). Similar levels of isoforms 1 and 4 are observed in ovary, testis and pancreas (at protein level).

The protein localises to the nucleus inner membrane. The protein resides in the nucleus envelope. It localises to the nucleus. Required for nuclear membrane integrity. Induces TOR1A and TOR1B ATPase activity and is required for their location on the nuclear membrane. Binds to A- and B-type lamins. Possible role in membrane attachment and assembly of the nuclear lamina. This Homo sapiens (Human) protein is Torsin-1A-interacting protein 1 (TOR1AIP1).